The sequence spans 76 residues: Putative membrane protein insertion efficiency factor (76 aa).

This sequence belongs to the UPF0161 family.

Its subcellular location is the cell inner membrane. Functionally, could be involved in insertion of integral membrane proteins into the membrane. The polypeptide is Putative membrane protein insertion efficiency factor (Porphyromonas gingivalis (strain ATCC 33277 / DSM 20709 / CIP 103683 / JCM 12257 / NCTC 11834 / 2561)).